Consider the following 811-residue polypeptide: Bifunctional enzyme MurC/Ddl (811 aa).

The segment at 1 to 450 (MNRKNHYHFI…GNALKDFEPK (450 aa)) is UDP-N-acetylmuramate--alanine ligase. Residues 111-117 (GSHGKTT) and 607-662 (LETF…SREI) contribute to the ATP site. Residues 451 to 811 (KLSVGVVCGG…NKQCLLTAKS (361 aa)) are D-alanine--D-alanine ligase. The region spanning 574–785 (KRLAASVGVP…FEQIVHQLII (212 aa)) is the ATP-grasp domain. 3 residues coordinate Mg(2+): D739, E752, and N754.

This sequence in the N-terminal section; belongs to the MurCDEF family. It in the C-terminal section; belongs to the D-alanine--D-alanine ligase family. The cofactor is Mg(2+). Mn(2+) serves as cofactor.

It localises to the cytoplasm. The catalysed reaction is UDP-N-acetyl-alpha-D-muramate + L-alanine + ATP = UDP-N-acetyl-alpha-D-muramoyl-L-alanine + ADP + phosphate + H(+). It carries out the reaction 2 D-alanine + ATP = D-alanyl-D-alanine + ADP + phosphate + H(+). It functions in the pathway cell wall biogenesis; peptidoglycan biosynthesis. This is Bifunctional enzyme MurC/Ddl (murC/ddlA) from Chlamydia caviae (strain ATCC VR-813 / DSM 19441 / 03DC25 / GPIC) (Chlamydophila caviae).